We begin with the raw amino-acid sequence, 218 residues long: Octanoyltransferase (218 aa).

The BPL/LPL catalytic domain occupies 27-210 (TGGEDTLYLV…QFLAIFTHPA (184 aa)). Residues 72 to 79 (RGGNITCH), 139 to 141 (SIG), and 152 to 154 (GLA) contribute to the substrate site. Cys-170 functions as the Acyl-thioester intermediate in the catalytic mechanism.

The protein belongs to the LipB family.

Its subcellular location is the cytoplasm. The catalysed reaction is octanoyl-[ACP] + L-lysyl-[protein] = N(6)-octanoyl-L-lysyl-[protein] + holo-[ACP] + H(+). Its pathway is protein modification; protein lipoylation via endogenous pathway; protein N(6)-(lipoyl)lysine from octanoyl-[acyl-carrier-protein]: step 1/2. Functionally, catalyzes the transfer of endogenously produced octanoic acid from octanoyl-acyl-carrier-protein onto the lipoyl domains of lipoate-dependent enzymes. Lipoyl-ACP can also act as a substrate although octanoyl-ACP is likely to be the physiological substrate. In Nitratidesulfovibrio vulgaris (strain ATCC 29579 / DSM 644 / CCUG 34227 / NCIMB 8303 / VKM B-1760 / Hildenborough) (Desulfovibrio vulgaris), this protein is Octanoyltransferase.